Here is a 534-residue protein sequence, read N- to C-terminus: Glucans biosynthesis protein D (534 aa).

The segment at residues Met1–Ala30 is a signal peptide (tat-type signal).

This sequence belongs to the OpgD/OpgG family. Predicted to be exported by the Tat system. The position of the signal peptide cleavage has not been experimentally proven.

Its subcellular location is the periplasm. It participates in glycan metabolism; osmoregulated periplasmic glucan (OPG) biosynthesis. Functionally, probably involved in the control of the structural glucose backbone of osmoregulated periplasmic glucans (OPGs). This is Glucans biosynthesis protein D from Xanthomonas oryzae pv. oryzae (strain PXO99A).